The chain runs to 748 residues: Rho GTPase-activating protein 24 (748 aa).

Residues 1–20 (MEENNDSTENPQQGQGRQNA) form a disordered region. Positions 7–18 (STENPQQGQGRQ) are enriched in polar residues. The PH domain maps to 19–125 (NAIKCGWLRK…WVKSIRRVIW (107 aa)). A Rho-GAP domain is found at 135 to 329 (QKLEDTVRYE…VMISKHDCLF (195 aa)). Disordered stretches follow at residues 354-476 (TMGQ…GTHS) and 582-641 (DFFG…SSNH). Polar residues-rich tracts occupy residues 356 to 374 (GQLQ…SRQC) and 382 to 405 (PQRS…SPKN). A phosphoserine mark is found at Ser-369, Ser-391, Ser-396, Ser-398, Ser-402, Ser-413, Ser-415, and Ser-437. Residues 432 to 476 (IVTNGSFSSSNAEGLEKTQTTPNGSLQARRSSSLKVSGTKMGTHS) are compositionally biased toward polar residues. The residue at position 452 (Thr-452) is a Phosphothreonine. Residues 600-615 (DLSHPRDYESKSDHRS) are compositionally biased toward basic and acidic residues. Residues 617 to 641 (GGRSSRATSSSDNSETFVGNSSSNH) are compositionally biased toward low complexity. A coiled-coil region spans residues 649–729 (SSLKQEMTKQ…KEMEQFFSTF (81 aa)).

In terms of assembly, interacts with FLNA. Phosphorylated by ROCK, leading to activate the RacGAP activity. In terms of tissue distribution, isoform 1 is widely expressed with a higher level in kidney. Isoform 2 is mainly expressed in endothelial cells.

It is found in the cytoplasm. The protein localises to the cytoskeleton. Its subcellular location is the cell junction. The protein resides in the adherens junction. It localises to the focal adhesion. It is found in the cell projection. In terms of biological role, rho GTPase-activating protein involved in cell polarity, cell morphology and cytoskeletal organization. Acts as a GTPase activator for the Rac-type GTPase by converting it to an inactive GDP-bound state. Controls actin remodeling by inactivating Rac downstream of Rho leading to suppress leading edge protrusion and promotes cell retraction to achieve cellular polarity. Able to suppress RAC1 and CDC42 activity in vitro. Overexpression induces cell rounding with partial or complete disruption of actin stress fibers and formation of membrane ruffles, lamellipodia, and filopodia. Isoform 2 is a vascular cell-specific GAP involved in modulation of angiogenesis. This is Rho GTPase-activating protein 24 (ARHGAP24) from Homo sapiens (Human).